The sequence spans 209 residues: MVKFLEKVGGYARDVLESAKYIGQGMGVVFDHMRRKPVTVQYPYEKLIPSERFRGRIHFERPKCISCEVCVRVCPINLPVVDYEFNKETKKKELNSYSIDFGVCIFCGNCVEYCPTSCLSMTEEYELSVYDRHELNYDDVALGRLPTRVTDDPVVRPIRELAYLPKGVMDGHLEDPGSRRAGELPEEIVARLRPADHSSGTDANKKEGE.

2 consecutive 4Fe-4S ferredoxin-type domains span residues 55 to 84 (GRIH…VDYE) and 95 to 124 (NSYS…MTEE). Residues cysteine 64, cysteine 67, cysteine 70, cysteine 74, cysteine 104, cysteine 107, cysteine 110, and cysteine 114 each contribute to the [4Fe-4S] cluster site.

This sequence belongs to the complex I 23 kDa subunit family. In terms of assembly, NDH-1 is composed of at least 11 different subunits. It depends on [4Fe-4S] cluster as a cofactor.

The protein resides in the cell inner membrane. The enzyme catalyses a plastoquinone + NADH + (n+1) H(+)(in) = a plastoquinol + NAD(+) + n H(+)(out). The catalysed reaction is a plastoquinone + NADPH + (n+1) H(+)(in) = a plastoquinol + NADP(+) + n H(+)(out). NDH-1 shuttles electrons from an unknown electron donor, via FMN and iron-sulfur (Fe-S) centers, to quinones in the respiratory and/or the photosynthetic chain. The immediate electron acceptor for the enzyme in this species is believed to be plastoquinone. Couples the redox reaction to proton translocation, and thus conserves the redox energy in a proton gradient. The protein is NAD(P)H-quinone oxidoreductase subunit I of Gloeobacter violaceus (strain ATCC 29082 / PCC 7421).